The chain runs to 178 residues: VLPEVYDQDGEPLRIGERYIIKNPLLGGGAVYLYNIGNLQCPNAVLQHMSIPQFLGKGTPVVFVRKSESDYGDVVRVMTGVYIKFFFKTSKLCVDETVWKVNDEELVVTGGNVGNENDIFKIKKTDLVIRGMKNVYKLLHCRSHLGCKNIGGNFKNGYPRLAAVDDDKDFIPFVFIKA.

Cystine bridges form between cysteine 41–cysteine 93 and cysteine 141–cysteine 147.

Belongs to the protease inhibitor I3 (leguminous Kunitz-type inhibitor) family.

The protein localises to the vacuole. In terms of biological role, inhibitor of cysteine proteases. May protect the plant by inhibiting proteases of invading organisms. In Solanum tuberosum (Potato), this protein is Cysteine protease inhibitor 7.